Consider the following 279-residue polypeptide: MAFQGTSRTLTQQSSAATSDDLQKILFSPEAIKKMATECDLGRHHWMRADNAISVRPLVPEVTHGRIASFFKSGYDVGELCSKGYMSVPQVLCAVTRTVSTDAEGSLRIYLADLGDKELSPIDGQCVSLHNHDLPALVSFQPTYDCPMETVGNRKRCFAVVIERHGYIGYTGTTASVCSNWQARFSSKNNNYTHIAAGKTLVLPFNRLAEQTKPSAVARLLKSQLNNIESSQYLLTNVKINQNARSESEELNVESPPAAIGSSSASRSEAFRPQVVNGL.

The tract at residues 247–279 (ESEELNVESPPAAIGSSSASRSEAFRPQVVNGL) is disordered. The segment covering 254–268 (ESPPAAIGSSSASRS) has biased composition (low complexity).

Belongs to the cucumovirus movement protein family.

The protein localises to the host cell junction. It is found in the host plasmodesma. Functionally, transports viral genome to neighboring plant cells directly through plasmosdesmata, without any budding. The movement protein allows efficient cell to cell propagation, by bypassing the host cell wall barrier. Acts by forming a tubular structure at the host plasmodesmata, enlarging it enough to allow free passage of virion capsids. This chain is Movement protein, found in Cucumis sativus (Cucumber).